The following is a 132-amino-acid chain: Subtelomeric hrmA-associated cluster protein AFUB_079000 (132 aa).

Its function is as follows. Part of the subtelomeric hrmA-associated cluster (HAC) containing genes that alter the hyphal surface (such as reduced total chitin or increased beta-glucan exposure) and perturb inter-hyphal interactions within the developing biofilms, resulting in a loss of vertically aligned polarized growing filaments. Consequently, this hypoxia-typic morphotype (called H-MORPH) with altered biofilm architecture leads to increased hypoxia fitness, increased host inflammation, rapid disease progression, and mortality in a murine model of invasive aspergillosis. In Aspergillus fumigatus (strain CBS 144.89 / FGSC A1163 / CEA10) (Neosartorya fumigata), this protein is Subtelomeric hrmA-associated cluster protein AFUB_079000.